A 576-amino-acid polypeptide reads, in one-letter code: Sulfite reductase [NADPH] hemoprotein beta-component (576 aa).

Cysteine 434, cysteine 440, cysteine 479, and cysteine 483 together coordinate [4Fe-4S] cluster. Residue cysteine 483 participates in siroheme binding.

It belongs to the nitrite and sulfite reductase 4Fe-4S domain family. Alpha(8)-beta(8). The alpha component is a flavoprotein, the beta component is a hemoprotein. The cofactor is siroheme. [4Fe-4S] cluster serves as cofactor.

It carries out the reaction hydrogen sulfide + 3 NADP(+) + 3 H2O = sulfite + 3 NADPH + 4 H(+). Its pathway is sulfur metabolism; hydrogen sulfide biosynthesis; hydrogen sulfide from sulfite (NADPH route): step 1/1. In terms of biological role, component of the sulfite reductase complex that catalyzes the 6-electron reduction of sulfite to sulfide. This is one of several activities required for the biosynthesis of L-cysteine from sulfate. The sequence is that of Sulfite reductase [NADPH] hemoprotein beta-component from Oceanobacillus iheyensis (strain DSM 14371 / CIP 107618 / JCM 11309 / KCTC 3954 / HTE831).